Consider the following 245-residue polypeptide: Zinc finger CCCH domain-containing protein 54 (245 aa).

The C3H1-type zinc finger occupies 92–119 (TYCAVACPAFRNGACHRGDSCEFAHGVF). Positions 175–204 (GNGDGVTMRMDDEGYDTSRSPVRSGKDDLD) are disordered.

As to quaternary structure, interacts with MARD1/FLZ9 and RD21A. Specifically expressed in embryo (at protein level).

It localises to the nucleus. Its function is as follows. Embryo-specific transcription factor required at the globular to heart stage transition in embryo development. The protein is Zinc finger CCCH domain-containing protein 54 of Arabidopsis thaliana (Mouse-ear cress).